Here is a 623-residue protein sequence, read N- to C-terminus: Putative ABC transporter ATP-binding protein MG014 (623 aa).

The ABC transmembrane type-1 domain occupies 16–325 (LILAPFFTFA…YIVLGFILTS (310 aa)). 6 helical membrane passes run 27–47 (IVID…VFSI), 81–101 (VLAT…LISI), 157–177 (FLRL…FAVT), 181–201 (DMSI…GILN), 266–286 (NIPF…LLVF), and 307–327 (IFAF…TSLT). Positions 365–611 (LEFRNISFGL…CSLYQKMKES (247 aa)) constitute an ABC transporter domain. 400 to 407 (GPTGSGKS) contacts ATP.

It belongs to the ABC transporter superfamily.

The protein resides in the cell membrane. This Mycoplasma genitalium (strain ATCC 33530 / DSM 19775 / NCTC 10195 / G37) (Mycoplasmoides genitalium) protein is Putative ABC transporter ATP-binding protein MG014.